Reading from the N-terminus, the 367-residue chain is Protein-glutamate methylesterase/protein-glutamine glutaminase (367 aa).

One can recognise a Response regulatory domain in the interval 6 to 123; that stretch reads RVLVVDDSAF…SLGIKQLADE (118 aa). Asp-57 carries the post-translational modification 4-aspartylphosphate. A CheB-type methylesterase domain is found at 165–361; that stretch reads ISKKEIVVVI…DILLKKVNEY (197 aa). Residues Ser-177, His-204, and Asp-303 contribute to the active site.

Belongs to the CheB family. Post-translationally, phosphorylated by CheA. Phosphorylation of the N-terminal regulatory domain activates the methylesterase activity.

The protein resides in the cytoplasm. The enzyme catalyses [protein]-L-glutamate 5-O-methyl ester + H2O = L-glutamyl-[protein] + methanol + H(+). The catalysed reaction is L-glutaminyl-[protein] + H2O = L-glutamyl-[protein] + NH4(+). Involved in chemotaxis. Part of a chemotaxis signal transduction system that modulates chemotaxis in response to various stimuli. Catalyzes the demethylation of specific methylglutamate residues introduced into the chemoreceptors (methyl-accepting chemotaxis proteins or MCP) by CheR. Also mediates the irreversible deamidation of specific glutamine residues to glutamic acid. The polypeptide is Protein-glutamate methylesterase/protein-glutamine glutaminase (Caldanaerobacter subterraneus subsp. tengcongensis (strain DSM 15242 / JCM 11007 / NBRC 100824 / MB4) (Thermoanaerobacter tengcongensis)).